Reading from the N-terminus, the 279-residue chain is Protease HtpX homolog (279 aa).

Helical transmembrane passes span 6–26 (TVAL…MMGG) and 28–48 (GGAL…YWFS). A Zn(2+)-binding site is contributed by His-127. The active site involves Glu-128. A Zn(2+)-binding site is contributed by His-131. 2 consecutive transmembrane segments (helical) span residues 137 to 157 (ILIG…AHMA) and 177 to 197 (LGLL…QMAI). A Zn(2+)-binding site is contributed by Glu-202.

Belongs to the peptidase M48B family. It depends on Zn(2+) as a cofactor.

It is found in the cell inner membrane. The polypeptide is Protease HtpX homolog (Syntrophotalea carbinolica (strain DSM 2380 / NBRC 103641 / GraBd1) (Pelobacter carbinolicus)).